We begin with the raw amino-acid sequence, 578 residues long: Phenylalanine--tRNA ligase beta subunit (578 aa).

One can recognise a B5 domain in the interval 292-370 (FDTDEKSVSH…RAYGFDNLEP (79 aa)). 4 residues coordinate Mg(2+): aspartate 348, aspartate 354, aspartate 357, and aspartate 358.

Belongs to the phenylalanyl-tRNA synthetase beta subunit family. Type 2 subfamily. Tetramer of two alpha and two beta subunits. The cofactor is Mg(2+).

Its subcellular location is the cytoplasm. The enzyme catalyses tRNA(Phe) + L-phenylalanine + ATP = L-phenylalanyl-tRNA(Phe) + AMP + diphosphate + H(+). This Halorubrum lacusprofundi (strain ATCC 49239 / DSM 5036 / JCM 8891 / ACAM 34) protein is Phenylalanine--tRNA ligase beta subunit.